We begin with the raw amino-acid sequence, 349 residues long: Isopentenyl-diphosphate delta-isomerase (349 aa).

R9–K10 is a substrate binding site. Residues A65–T67, S95, and N124 contribute to the FMN site. S95–H97 lines the substrate pocket. Q154 is a binding site for substrate. E155 contributes to the Mg(2+) binding site. Residues K186, S211, T216, G262–R264, and S283–R284 contribute to the FMN site.

The protein belongs to the IPP isomerase type 2 family. In terms of assembly, homooctamer. Dimer of tetramers. The cofactor is FMN. NADPH is required as a cofactor. Requires Mg(2+) as cofactor.

It localises to the cytoplasm. The catalysed reaction is isopentenyl diphosphate = dimethylallyl diphosphate. Its function is as follows. Involved in the biosynthesis of isoprenoids. Catalyzes the 1,3-allylic rearrangement of the homoallylic substrate isopentenyl (IPP) to its allylic isomer, dimethylallyl diphosphate (DMAPP). This Staphylococcus aureus (strain USA300 / TCH1516) protein is Isopentenyl-diphosphate delta-isomerase.